A 294-amino-acid chain; its full sequence is Sarcotoxin II-2 (294 aa).

The N-terminal stretch at 1–22 (MKSFVFFAACFAIVALNSLAHA) is a signal peptide. Residues 23-24 (YP) constitute a propeptide, removed by a dipeptidylpeptidase. Gln25 is modified (pyrrolidone carboxylic acid). Arg293 is subject to Arginine amide.

It belongs to the attacin/sarcotoxin-2 family. As to expression, synthesized by the fat body and is eventually secreted into the hemolymph.

It is found in the secreted. Sarcotoxin II is an antibacterial protein which plays a role in the inflammatory response of this insect. The main effect of sarcotoxin II on E.coli may be the inhibition of cell wall synthesis, including septum formation. The sequence is that of Sarcotoxin II-2 from Sarcophaga peregrina (Flesh fly).